A 136-amino-acid chain; its full sequence is uncharacterized protein (136 aa).

This is an uncharacterized protein from Pseudomonas amygdali pv. tabaci (Pseudomonas syringae pv. tabaci).